The following is a 467-amino-acid chain: MLGFLDYIQLAFSDASKWNRDNSYSQLTTTANALLDFSTPERLKVNLSSLSTPHFATTYTLGTVGLIDGSISYLFTTVPLRDTPSRSTLIPLRKLVPGYRQISAPSLPPELPTVDGRDGDLAIGETQGILKKKPTLLHATLHLPPPTTLTGLFLRRLSPTTQLSLAFCSSRASTPKSAPQAALVTQILHDTGKYSSEFLFSTDNALFGFKGLWNFGPDPRKQNQQGDLARDSRRSLLSLLSAGAEAYYSPVSSVVGLSTGLRFTTLPAATESPHFTFPYTLTLTLTPLTGSMSTTYSLLASPNVSFSSRFGFNVYSWESEMVAGCELWRRSSNNRLHDDKSQRDSALFGVDDLTWARRKMGLPDTAPSRNRECDDLPPPRYDNYYHQRSPHASDSVIKVRVDQSWNIRALWEGRVKELLVSAGVALGPTPRSSLSYASSSAVGGVGAAGGLSSYGWKSVGVSVLYSS.

This sequence belongs to the MDM10 family. As to quaternary structure, component of the ER-mitochondria encounter structure (ERMES) or MDM complex, composed of MMM1, MDM10, MDM12 and MDM34. Associates with the mitochondrial outer membrane sorting assembly machinery SAM(core) complex.

Its subcellular location is the mitochondrion outer membrane. Component of the ERMES/MDM complex, which serves as a molecular tether to connect the endoplasmic reticulum and mitochondria. Components of this complex are involved in the control of mitochondrial shape and protein biogenesis and may function in phospholipid exchange. MDM10 is involved in the late assembly steps of the general translocase of the mitochondrial outer membrane (TOM complex). Functions in the TOM40-specific route of the assembly of outer membrane beta-barrel proteins, including the association of TOM40 with the receptor TOM22 and small TOM proteins. Can associate with the SAM(core) complex as well as the MDM12-MMM1 complex, both involved in late steps of the major beta-barrel assembly pathway, that is responsible for biogenesis of all outer membrane beta-barrel proteins. May act as a switch that shuttles between both complexes and channels precursor proteins into the TOM40-specific pathway. Plays a role in mitochondrial morphology and in the inheritance of mitochondria. In Ajellomyces capsulatus (strain G186AR / H82 / ATCC MYA-2454 / RMSCC 2432) (Darling's disease fungus), this protein is Mitochondrial distribution and morphology protein 10.